Consider the following 255-residue polypeptide: Taurine import ATP-binding protein TauB (255 aa).

Residues 2–229 (LQISHLYADY…RFVAGESSRS (228 aa)) form the ABC transporter domain. 34-41 (GPSGCGKT) serves as a coordination point for ATP.

Belongs to the ABC transporter superfamily. Taurine importer (TC 3.A.1.17.1) family. The complex is composed of two ATP-binding proteins (TauB), two transmembrane proteins (TauC) and a solute-binding protein (TauA).

The protein resides in the cell inner membrane. It catalyses the reaction taurine(out) + ATP + H2O = taurine(in) + ADP + phosphate + H(+). Part of the ABC transporter complex TauABC involved in taurine import. Responsible for energy coupling to the transport system. The polypeptide is Taurine import ATP-binding protein TauB (Escherichia coli O157:H7).